A 75-amino-acid chain; its full sequence is MSFPSLLFLGFSGVLAFGEVGWVGVYPPGRGMIRVRCVGCVVGWLGLRRVLVRGGIWLLLHPGIGRVLCLYLGAW.

A helical transmembrane segment spans residues 4–26 (PSLLFLGFSGVLAFGEVGWVGVY).

It localises to the membrane. This is an uncharacterized protein from Treponema pallidum (strain Nichols).